A 209-amino-acid chain; its full sequence is Streptogramin A acetyltransferase (209 aa).

H82 is a catalytic residue.

Belongs to the transferase hexapeptide repeat family. In terms of assembly, homohexamer.

Its function is as follows. Inactivates the A compounds of streptogramin antibiotics by acetylation, thus providing resistance to these antibiotics. The chain is Streptogramin A acetyltransferase (vatD) from Enterococcus faecium (Streptococcus faecium).